A 512-amino-acid polypeptide reads, in one-letter code: ATP synthase subunit alpha (512 aa).

169-176 (GDRQTGKT) serves as a coordination point for ATP.

Belongs to the ATPase alpha/beta chains family. F-type ATPases have 2 components, CF(1) - the catalytic core - and CF(0) - the membrane proton channel. CF(1) has five subunits: alpha(3), beta(3), gamma(1), delta(1), epsilon(1). CF(0) has three main subunits: a(1), b(2) and c(9-12). The alpha and beta chains form an alternating ring which encloses part of the gamma chain. CF(1) is attached to CF(0) by a central stalk formed by the gamma and epsilon chains, while a peripheral stalk is formed by the delta and b chains.

The protein resides in the cell inner membrane. It catalyses the reaction ATP + H2O + 4 H(+)(in) = ADP + phosphate + 5 H(+)(out). Its function is as follows. Produces ATP from ADP in the presence of a proton gradient across the membrane. The alpha chain is a regulatory subunit. In Leptothrix cholodnii (strain ATCC 51168 / LMG 8142 / SP-6) (Leptothrix discophora (strain SP-6)), this protein is ATP synthase subunit alpha.